A 490-amino-acid polypeptide reads, in one-letter code: Glutamate--tRNA ligase 2 (490 aa).

The 'HIGH' region motif lies at Pro-33 to Gly-43. The 'KMSKS' region signature appears at Lys-262–Arg-266. Lys-265 lines the ATP pocket.

The protein belongs to the class-I aminoacyl-tRNA synthetase family. Glutamate--tRNA ligase type 1 subfamily. Monomer.

The protein localises to the cytoplasm. It carries out the reaction tRNA(Glu) + L-glutamate + ATP = L-glutamyl-tRNA(Glu) + AMP + diphosphate. In terms of biological role, catalyzes the attachment of glutamate to tRNA(Glu) in a two-step reaction: glutamate is first activated by ATP to form Glu-AMP and then transferred to the acceptor end of tRNA(Glu). The polypeptide is Glutamate--tRNA ligase 2 (Parvibaculum lavamentivorans (strain DS-1 / DSM 13023 / NCIMB 13966)).